Consider the following 63-residue polypeptide: DNA-directed RNA polymerase 7 kDa subunit (63 aa).

The protein belongs to the poxviridae DNA-directed RNA polymerase 7 kDa subunit family. As to quaternary structure, the DNA-dependent RNA polymerase used for intermediate and late genes expression consists of eight subunits 147 kDa, 133 kDa, 35 kDa, 30 kDa, 22 kDa, 19 kDa, 18 kDa and 7 kDa totalling more than 500 kDa in mass. The same holoenzyme, with the addition of the transcription-specificity factor RAP94, is used for early gene expression.

It is found in the virion. The catalysed reaction is RNA(n) + a ribonucleoside 5'-triphosphate = RNA(n+1) + diphosphate. Its function is as follows. Part of the DNA-dependent RNA polymerase which catalyzes the transcription of viral DNA into RNA using the four ribonucleoside triphosphates as substrates. Responsible for the transcription of early, intermediate and late genes. DNA-dependent RNA polymerase associates with the early transcription factor (ETF) thereby allowing the early genes transcription. Late transcription, and probably also intermediate transcription, require newly synthesized RNA polymerase. The protein is DNA-directed RNA polymerase 7 kDa subunit (RPO7) of Fowlpox virus (strain NVSL) (FPV).